Reading from the N-terminus, the 192-residue chain is Thymidylate kinase (192 aa).

Gly-7–Ser-14 is an ATP binding site.

Belongs to the thymidylate kinase family.

The enzyme catalyses dTMP + ATP = dTDP + ADP. Functionally, phosphorylation of dTMP to form dTDP in both de novo and salvage pathways of dTTP synthesis. This is Thymidylate kinase from Campylobacter jejuni subsp. jejuni serotype O:6 (strain 81116 / NCTC 11828).